Reading from the N-terminus, the 611-residue chain is Putative pentatricopeptide repeat-containing protein At1g56570 (611 aa).

13 PPR repeats span residues 44–74, 75–109, 110–144, 145–176, 177–211, 212–246, 247–281, 282–311, 312–346, 347–377, 379–413, 414–444, and 450–480; these read HHILATNLIVSYFEKGLVEEARSLFDEMPDR, DVVAWTAMITGYASSNYNARAWECFHEMVKQGTSP, NEFTLSSVLKSCRNMKVLAYGALVHGVVVKLGMEG, SLYVDNAMMNMYATCSVTMEAACLIFRDIKVK, NDVTWTTLITGFTHLGDGIGGLKMYKQMLLENAEV, TPYCITIAVRASASIDSVTTGKQIHASVIKRGFQS, NLPVMNSILDLYCRCGYLSEAKHYFHEMEDKDLIT, WNTLISELERSDSSEALLMFQRFESQGFVP, NCYTFTSLVAACANIAALNCGQQLHGRIFRRGFNK, NVELANALIDMYAKCGNIPDSQRVFGEIVDR, NLVSWTSMMIGYGSHGYGAEAVELFDKMVSSGIRP, DRIVFMAVLSACRHAGLVEKGLKYFNVMESE, and DRDIYNCVVDLLGRAGKIGEAYELVERMPFK. The interval 485-561 is type E motif; the sequence is TWGAILGACK…EAGMSWILVE (77 aa). A type E(+) motif region spans residues 562 to 592; it reads NQVFSFAVSDKMCPNASSVYSVLGLLIEETR.

It belongs to the PPR family. PCMP-E subfamily.

The sequence is that of Putative pentatricopeptide repeat-containing protein At1g56570 (PCMP-E64) from Arabidopsis thaliana (Mouse-ear cress).